A 305-amino-acid chain; its full sequence is MCGIAGVVYKDGKLHSVGADMTRMLHALQHRGPDSAGFAIYGGLGLEENDYLLNIEVKDKPGLLDMVKETVELVSPIGSDEVIPSVENHIIYRCRITLESFSQLKPLIMDIDSIDDVIVLNGSHSFEMIKDVGSVLEIADRYDTWSKKGTHAIGHTRFSTESIVDRYHAHPFQSYIIPDITVVHNGQITNYWKIREPLERKGHIFETNNDTECIVHYVADKLASGYSLEEALEQSVKDMDGPFSYIVGTPQGVGIAKDQLGLRPGVMAENDEVFAVASEEVSLREVMDTSEVEQISPGEVRVYEI.

The active site involves cysteine 2. Positions 2–305 (CGIAGVVYKD…SPGEVRVYEI (304 aa)) constitute a Glutamine amidotransferase type-2 domain.

The chain is Putative glutamine amidotransferase MTH_191 from Methanothermobacter thermautotrophicus (strain ATCC 29096 / DSM 1053 / JCM 10044 / NBRC 100330 / Delta H) (Methanobacterium thermoautotrophicum).